The chain runs to 349 residues: D-arabinose 1-dehydrogenase (NADP(+)) (349 aa).

Zn(2+) contacts are provided by cysteine 46, histidine 70, aspartate 99, cysteine 102, cysteine 105, cysteine 113, and aspartate 155.

This sequence belongs to the zinc-containing alcohol dehydrogenase family. In terms of assembly, homotetramer. Dimer of dimers. The cofactor is Zn(2+).

The catalysed reaction is D-arabinose + NADP(+) = D-arabinono-1,4-lactone + NADPH + H(+). In terms of biological role, participates in a pentose oxidation pathway that converts D-arabinose to 2-oxoglutarate. Catalyzes the NADP-dependent conversion of D-arabinose to D-arabinono-1,4-lactone. In vitro, can also use L-fucose, L-galactose and D-ribose. Shows highest activity with L-fucose, in combinaison with NAD, and lower activity toward L-galactose and D-ribose. When acting on its physiological substrate, D-arabinose, shows a clear preference for NADP over NAD. The protein is D-arabinose 1-dehydrogenase (NADP(+)) of Saccharolobus solfataricus (strain ATCC 35092 / DSM 1617 / JCM 11322 / P2) (Sulfolobus solfataricus).